Consider the following 966-residue polypeptide: LRR receptor-like serine/threonine-protein kinase ERL1 (966 aa).

An N-terminal signal peptide occupies residues 1–25 (MKEKMQRMVLSLAMVGFMVFGVASA). Residues 26-582 (MNNEGKALMA…PLPKSRVFSR (557 aa)) lie on the Extracellular side of the membrane. One copy of the LRR 1 repeat lies at 40–63 (FSNLVNMLLDWDDVHNSDLCSWRG). Residues Asn68 and Asn77 are each glycosylated (N-linked (GlcNAc...) asparagine). 20 LRR repeats span residues 75 to 94 (SLNL…IGDL), 95 to 118 (RNLQ…IGNC), 120 to 142 (SLVY…ISKL), 143 to 166 (KQLE…LTQI), 168 to 190 (NLKR…LYWN), 192 to 214 (VLQY…MCQL), 215 to 238 (TGLW…IGNC), 239 to 261 (TSFQ…NIGF), 262 to 285 (LQVA…IGLM), 286 to 311 (QALA…NLSF), 313 to 333 (GKLY…LGNM), 334 to 357 (SRLS…LGKL), 359 to 381 (QLFE…ISSC), 383 to 404 (ALNQ…AFRN), 405 to 429 (LGSL…LGHI), 431 to 453 (NLDK…LGDL), 454 to 476 (EHLL…EFGN), 478 to 500 (RSIQ…ELGQ), 501 to 525 (LQNL…LTNC), and 527 to 550 (TLVN…NFSR). N-linked (GlcNAc...) asparagine glycans are attached at residues Asn226 and Asn237. 2 N-linked (GlcNAc...) asparagine glycosylation sites follow: Asn308 and Asn332. N-linked (GlcNAc...) asparagine glycosylation is present at Asn377. Asn412, Asn441, and Asn460 each carry an N-linked (GlcNAc...) asparagine glycan. N-linked (GlcNAc...) asparagine glycans are attached at residues Asn532, Asn537, and Asn547. The chain crosses the membrane as a helical span at residues 583 to 603 (GALICIVLGVITLLCMIFLAV). Residues 604-966 (YKSMQQKKIL…FREVISKSSI (363 aa)) lie on the Cytoplasmic side of the membrane. 2 positions are modified to phosphothreonine: Thr637 and Thr645. A Protein kinase domain is found at 648-921 (LNEKFIIGYG…RVLLSLVPSL (274 aa)). ATP-binding positions include 654–662 (IGYGASSTV) and Lys676. Phosphotyrosine is present on residues Tyr721 and Tyr760. Asp773 acts as the Proton acceptor in catalysis. Tyr815 is modified (phosphotyrosine). Phosphothreonine is present on Thr823.

The protein belongs to the protein kinase superfamily. Ser/Thr protein kinase family. Homodimer and heterodimer with ERECTA and TMM. Interacts with EPF1 and EPF2. Interacts with SERK1, SERK2, SERK3/BAK1 and SERK4 in a EPF1-induced manner. Mostly expressed in developing organs, including bud clusters, flowers, siliques and young rosettes. Also detected in mature aboveground organs, such as leaves, stems and pedicels, but barely in roots.

Its subcellular location is the cell membrane. The catalysed reaction is L-seryl-[protein] + ATP = O-phospho-L-seryl-[protein] + ADP + H(+). It carries out the reaction L-threonyl-[protein] + ATP = O-phospho-L-threonyl-[protein] + ADP + H(+). Receptor kinase that regulates inflorescence architecture and organ shape as well as stomatal patterning, including density and clustering, together with ER and ERL2. Redundantly involved with ER in procambial development regulation. Forms a functional ligand-receptor pair with EPF1 (AC Q8S8I4). Forms a constitutive complex with TMM involved in the recognition of the stomatal regulatory peptides EPF1, EPF2 and EPFL9/STOMAGEN. The chain is LRR receptor-like serine/threonine-protein kinase ERL1 from Arabidopsis thaliana (Mouse-ear cress).